A 345-amino-acid chain; its full sequence is Anthranilate phosphoribosyltransferase (345 aa).

5-phospho-alpha-D-ribose 1-diphosphate is bound by residues Gly-84, Gly-87–Asp-88, Thr-92, Asn-94–Thr-97, Lys-112–Ser-120, and Ser-124. Gly-84 provides a ligand contact to anthranilate. Ser-96 serves as a coordination point for Mg(2+). Residue Asn-115 coordinates anthranilate. Arg-170 is a binding site for anthranilate. Residues Asp-229 and Glu-230 each contribute to the Mg(2+) site.

Belongs to the anthranilate phosphoribosyltransferase family. As to quaternary structure, homodimer. It depends on Mg(2+) as a cofactor.

It carries out the reaction N-(5-phospho-beta-D-ribosyl)anthranilate + diphosphate = 5-phospho-alpha-D-ribose 1-diphosphate + anthranilate. Its pathway is amino-acid biosynthesis; L-tryptophan biosynthesis; L-tryptophan from chorismate: step 2/5. Its function is as follows. Catalyzes the transfer of the phosphoribosyl group of 5-phosphorylribose-1-pyrophosphate (PRPP) to anthranilate to yield N-(5'-phosphoribosyl)-anthranilate (PRA). The sequence is that of Anthranilate phosphoribosyltransferase from Xanthomonas campestris pv. campestris (strain B100).